The primary structure comprises 221 residues: Nuclear phosphoprotein UL3 homolog (221 aa).

Belongs to the alphaherpesvirinae HHV-1 UL3 family. In terms of processing, phosphorylated.

It is found in the host nucleus. In Varicella-zoster virus (strain Dumas) (HHV-3), this protein is Nuclear phosphoprotein UL3 homolog.